We begin with the raw amino-acid sequence, 114 residues long: Probable 4-amino-4-deoxy-L-arabinose-phosphoundecaprenol flippase subunit ArnE (114 aa).

3 consecutive transmembrane segments (helical) span residues 41-61 (PWLI…IYLL), 64-84 (LPLS…LIGS), and 94-114 (YHNW…GGLL). Residues 53–112 (GMLLWIYLLQRLPLSMAYPMLSINLVLVLIGSRLFFHEQISYHNWLGAGAIIIGALLLGG) enclose the EamA domain.

Belongs to the ArnE family. As to quaternary structure, heterodimer of ArnE and ArnF.

Its subcellular location is the cell inner membrane. It participates in bacterial outer membrane biogenesis; lipopolysaccharide biosynthesis. Translocates 4-amino-4-deoxy-L-arabinose-phosphoundecaprenol (alpha-L-Ara4N-phosphoundecaprenol) from the cytoplasmic to the periplasmic side of the inner membrane. This is Probable 4-amino-4-deoxy-L-arabinose-phosphoundecaprenol flippase subunit ArnE from Aeromonas salmonicida (strain A449).